A 96-amino-acid polypeptide reads, in one-letter code: uncharacterized protein (96 aa).

A signal peptide spans 1–23 (MKQFYSVVLTIIIYISSQSNVVS). Intrachain disulfides connect Cys60–Cys74, Cys67–Cys78, and Cys73–Cys83.

Its subcellular location is the secreted. This is an uncharacterized protein from Schistosoma japonicum (Blood fluke).